A 156-amino-acid polypeptide reads, in one-letter code: Protein-export protein SecB (156 aa).

It belongs to the SecB family. In terms of assembly, homotetramer, a dimer of dimers. One homotetramer interacts with 1 SecA dimer.

It is found in the cytoplasm. One of the proteins required for the normal export of preproteins out of the cell cytoplasm. It is a molecular chaperone that binds to a subset of precursor proteins, maintaining them in a translocation-competent state. It also specifically binds to its receptor SecA. The polypeptide is Protein-export protein SecB (Desulfotalea psychrophila (strain LSv54 / DSM 12343)).